An 840-amino-acid chain; its full sequence is Probable alpha-glucuronidase A (840 aa).

An N-terminal signal peptide occupies residues 1 to 19 (MWSGIPIFALLSSIGIAAA). Asparagine 50, asparagine 149, asparagine 222, asparagine 262, asparagine 279, asparagine 310, asparagine 465, asparagine 527, asparagine 576, asparagine 610, asparagine 682, asparagine 723, and asparagine 732 each carry an N-linked (GlcNAc...) asparagine glycan.

Belongs to the glycosyl hydrolase 67 family.

Its subcellular location is the secreted. It catalyses the reaction an alpha-D-glucuronoside + H2O = D-glucuronate + an alcohol. Functionally, alpha-glucuronidase involved in the hydrolysis of xylan, a major structural heterogeneous polysaccharide found in plant biomass representing the second most abundant polysaccharide in the biosphere, after cellulose. Releases 4-O-methylglucuronic acid from xylan. The sequence is that of Probable alpha-glucuronidase A (aguA) from Aspergillus fumigatus (strain ATCC MYA-4609 / CBS 101355 / FGSC A1100 / Af293) (Neosartorya fumigata).